A 261-amino-acid polypeptide reads, in one-letter code: MEADGLGCAVCVLTGASRGFGRALAPQLARLLSPGSVMLVSARSESMLRQLKEELGAQQPDLKVVLAAADLGTEAGVQRLLSAVRELPRPEGLQRLLLINNAATLGDVSKGFLNVNDLAEVNNYWALNLTSMLCLTSGTLNAFQDSPGLSKTVVNISSLCALQPYKGWGLYCAGKAARDMLYQVLAAEEPSVRVLSYAPGPLDNDMQQLARETSKDPELRSKLQKLKSDGALVDCGTSAQKLLGLLQKDTFQSGAHVDFYD.

At Met1 the chain carries N-acetylmethionine. An NADP(+)-binding site is contributed by Gly15–Gly21. Residue Ser33 is modified to Phosphoserine. Residue Arg43 to Ser44 participates in NADP(+) binding. Ser46 is modified (phosphoserine). Asp70–Leu71 is an NADP(+) binding site. Residues Ser158–Leu159 and Tyr171 each bind substrate. NADP(+) is bound at residue Lys175. At Ser196 the chain carries Phosphoserine. A substrate-binding site is contributed by Gly200. Leu202–Gln207 is an NADP(+) binding site. Ser214 is subject to Phosphoserine. 2 residues coordinate substrate: Lys222 and Asp258.

This sequence belongs to the sepiapterin reductase family. In terms of assembly, homodimer.

Its subcellular location is the cytoplasm. The enzyme catalyses L-erythro-7,8-dihydrobiopterin + NADP(+) = L-sepiapterin + NADPH + H(+). It catalyses the reaction (6R)-L-erythro-5,6,7,8-tetrahydrobiopterin + 2 NADP(+) = 6-pyruvoyl-5,6,7,8-tetrahydropterin + 2 NADPH + 2 H(+). Functionally, catalyzes the final one or two reductions in tetra-hydrobiopterin biosynthesis to form 5,6,7,8-tetrahydrobiopterin. The chain is Sepiapterin reductase (Spr) from Mus musculus (Mouse).